The chain runs to 270 residues: Putative phosphoenolpyruvate synthase regulatory protein (270 aa).

150–157 contacts ADP; the sequence is GVSRCGKT.

Belongs to the pyruvate, phosphate/water dikinase regulatory protein family. PSRP subfamily.

The enzyme catalyses [pyruvate, water dikinase] + ADP = [pyruvate, water dikinase]-phosphate + AMP + H(+). It catalyses the reaction [pyruvate, water dikinase]-phosphate + phosphate + H(+) = [pyruvate, water dikinase] + diphosphate. Bifunctional serine/threonine kinase and phosphorylase involved in the regulation of the phosphoenolpyruvate synthase (PEPS) by catalyzing its phosphorylation/dephosphorylation. The chain is Putative phosphoenolpyruvate synthase regulatory protein from Shewanella putrefaciens (strain CN-32 / ATCC BAA-453).